The chain runs to 644 residues: MTYDDIKAKVGELLKTIISEMLEKEGKTWEGEILFDETPNMEFGDFATTVAFLLAKVFKKAPRIIAQEIASNLEDKLPEYIAKVEVAGAGYINFFLDYEKFSKLTVKEILQKGEHFGESKIGEGKKVIVEHTSVNPTKPLHMGHARNAVLGDTVARIMRALGYNVEVQNYIDDLGVQFAQVLWGYLNMREEFESIIKELKEKGLSKEDILDHALGLLYVEVHKKMEEYPEVEREIRSIMKELEKEDNEISEKGRKLAEDVVKAQMKTTYRLSISYDLLSWESDIVRSGIFEESYKRIQENSHFEWAQEGKYKGAFIMKLGDLFPDLENPDTVLIRSDGTATYTGKDIAYHLWKFGKVSADMRYKVWDKINDHKTWTTAKDGERMPGRFANAEIVINVVGSEQRYEQMAVAYALKLLGYEEEYHNFHHLAYEHVVRPEGKFSGRKGTWIGFTVDEVLDEAVKRAKELVEEKNPSLSGEEKEKIAEIVGVGAVRYNLVKYSPEKIITFRWEDVLNFEGESAPYIQYAHARCASILKKAMEEGINIDKDALLKNADFSKLDNKEKELIKIISKFPEIVKTAGRDIKPHLLATYANELAMVFNSFYMALPVLKAEEGVRELRLLLVIATKQVLKNTLGLMGIEAPEVM.

The 'HIGH' region signature appears at 134–144 (VNPTKPLHMGH).

The protein belongs to the class-I aminoacyl-tRNA synthetase family.

The protein localises to the cytoplasm. It carries out the reaction tRNA(Arg) + L-arginine + ATP = L-arginyl-tRNA(Arg) + AMP + diphosphate. In Thermococcus sibiricus (strain DSM 12597 / MM 739), this protein is Arginine--tRNA ligase.